The following is a 592-amino-acid chain: Isocitrate dehydrogenase kinase/phosphatase 1 (592 aa).

Residues 337–343 (APGTPGM) and Lys-358 contribute to the ATP site. Asp-393 is an active-site residue.

This sequence belongs to the AceK family.

The protein localises to the cytoplasm. It catalyses the reaction L-seryl-[isocitrate dehydrogenase] + ATP = O-phospho-L-seryl-[isocitrate dehydrogenase] + ADP + H(+). Its function is as follows. Bifunctional enzyme which can phosphorylate or dephosphorylate isocitrate dehydrogenase (IDH) on a specific serine residue. This is a regulatory mechanism which enables bacteria to bypass the Krebs cycle via the glyoxylate shunt in response to the source of carbon. When bacteria are grown on glucose, IDH is fully active and unphosphorylated, but when grown on acetate or ethanol, the activity of IDH declines drastically concomitant with its phosphorylation. The protein is Isocitrate dehydrogenase kinase/phosphatase 1 of Pseudoalteromonas translucida (strain TAC 125).